A 99-amino-acid chain; its full sequence is Nucleoid-associated protein UPA3_0088 (99 aa).

Belongs to the YbaB/EbfC family. In terms of assembly, homodimer.

The protein resides in the cytoplasm. The protein localises to the nucleoid. Functionally, binds to DNA and alters its conformation. May be involved in regulation of gene expression, nucleoid organization and DNA protection. In Ureaplasma parvum serovar 3 (strain ATCC 27815 / 27 / NCTC 11736), this protein is Nucleoid-associated protein UPA3_0088.